A 966-amino-acid polypeptide reads, in one-letter code: Muscular LMNA-interacting protein (966 aa).

Ser-129 bears the Phosphoserine mark. 8 disordered regions span residues Glu-132–Arg-154, Ser-182–Gln-207, Leu-303–Ser-337, Pro-354–Pro-388, Ile-434–Ser-562, Lys-597–Leu-684, Ser-785–Thr-837, and Ser-929–Glu-966. Residues Pro-144 to Thr-810 are required for interaction with ISL1. Polar residues-rich tracts occupy residues Lys-195–Gln-207 and Thr-325–Ser-337. Composition is skewed to low complexity over residues Pro-354 to Ser-387, Thr-437 to Thr-455, and Pro-478 to Ala-497. Position 486 is a phosphoserine (Ser-486). Residues Thr-507–Leu-521 show a composition bias toward polar residues. 2 stretches are compositionally biased toward basic and acidic residues: residues Gly-542–Arg-555 and Lys-597–Gln-607. Polar residues-rich tracts occupy residues Ser-639 to Pro-649 and Gly-657 to Leu-684. Residues Ser-785–Gln-797 show a composition bias toward low complexity. Phosphoserine is present on Ser-791. The segment covering Thr-798–Thr-810 has biased composition (polar residues). Low complexity predominate over residues Ser-825–Ser-834. Over residues Ser-937–Tyr-946 the composition is skewed to polar residues. Positions Pro-957–Glu-966 are enriched in basic and acidic residues.

In terms of assembly, directly interacts with LMNA. Interacts with ISL1 (via N-terminal domain); the interaction represses ISL1 transactivator activity. Interactions of ISL1 with MLIP1 and GCN5/KAT2A may be mutually exclusive. In terms of tissue distribution, expressed in cardiomyoctes. Expression is highly reduced in hypertrophic cardiomyocytes.

It is found in the nucleus. The protein localises to the nucleus envelope. The protein resides in the PML body. Its subcellular location is the cytoplasm. It localises to the cytosol. It is found in the cell membrane. The protein localises to the sarcolemma. In terms of biological role, required for myoblast differentiation into myotubes, possibly acting as a transcriptional regulator of the myogenic program. Required for cardiac adaptation to stress through integrated regulation of the AKT/mTOR pathways and FOXO1. Regulates cardiac homeostasis and plays a role in the protection against cardiac hypertrophy. Binds chromatin. May act as a transcriptional cofactor for ISL1, repressing its transcriptional activity. May also repress MYOCD transcriptional activity. The polypeptide is Muscular LMNA-interacting protein (Rattus norvegicus (Rat)).